A 129-amino-acid chain; its full sequence is UPF0344 protein SSP1805 (129 aa).

4 helical membrane passes run 1 to 21, 36 to 56, 68 to 88, and 100 to 120; these read MLHM…AAYF, IHML…WVWI, MLLT…EVTI, and LMWT…ILPM.

Belongs to the UPF0344 family.

It is found in the cell membrane. This Staphylococcus saprophyticus subsp. saprophyticus (strain ATCC 15305 / DSM 20229 / NCIMB 8711 / NCTC 7292 / S-41) protein is UPF0344 protein SSP1805.